The sequence spans 420 residues: Exodeoxyribonuclease 7 large subunit (420 aa).

The protein belongs to the XseA family. In terms of assembly, heterooligomer composed of large and small subunits.

Its subcellular location is the cytoplasm. It catalyses the reaction Exonucleolytic cleavage in either 5'- to 3'- or 3'- to 5'-direction to yield nucleoside 5'-phosphates.. Its function is as follows. Bidirectionally degrades single-stranded DNA into large acid-insoluble oligonucleotides, which are then degraded further into small acid-soluble oligonucleotides. The chain is Exodeoxyribonuclease 7 large subunit from Helicobacter pylori (strain ATCC 700392 / 26695) (Campylobacter pylori).